Reading from the N-terminus, the 192-residue chain is T-cell surface glycoprotein CD3 epsilon chain (192 aa).

The first 21 residues, 1-21 (MQSGNLWRALGLCLLLVGAWA), serve as a signal peptide directing secretion. At 23–114 (DADEQKPYEV…QNCMEVNLME (92 aa)) the chain is on the extracellular side. The Ig-like domain maps to 26-97 (EQKPYEVSIS…EGNKEAAHTL (72 aa)). Cys43 and Cys84 are oxidised to a cystine. Residue Asn72 is glycosylated (N-linked (GlcNAc...) asparagine). The chain crosses the membrane as a helical span at residues 115 to 135 (VATIIVVDICVTLGLLLLVYY). The Cytoplasmic portion of the chain corresponds to 136–192 (WSKSRKAKASPMTRGAGAGGRPRGQNKGRPPPVPNPDYEPIRKGQRDLYAGLNQRGV). The disordered stretch occupies residues 145-180 (SPMTRGAGAGGRPRGQNKGRPPPVPNPDYEPIRKGQ). The interval 160 to 177 (QNKGRPPPVPNPDYEPIR) is NUMB-binding region. The ITAM domain maps to 163 to 190 (GRPPPVPNPDYEPIRKGQRDLYAGLNQR). Residues 164–171 (RPPPVPNP) form a proline-rich sequence region. 2 positions are modified to phosphotyrosine: Tyr173 and Tyr184.

The TCR-CD3 complex is composed of a CD3D/CD3E and a CD3G/CD3E heterodimers that preferentially associate with TCRalpha and TCRbeta, respectively, to form TCRalpha/CD3E/CD3G and TCRbeta/CD3G/CD3E trimers. In turn, the hexamer interacts with CD3Z homodimer to form the TCR-CD3 complex. Alternatively, TCRalpha and TCRbeta can be replaced by TCRgamma and TCRdelta. Interacts with CD6. Interacts (via Proline-rich sequence) with NCK1; the interaction is ligand dependent but independent of tyrosine kinase activation. In terms of processing, phosphorylated on Tyr residues after T-cell receptor triggering by LCK in association with CD4/CD8.

It is found in the cell membrane. Part of the TCR-CD3 complex present on T-lymphocyte cell surface that plays an essential role in adaptive immune response. When antigen presenting cells (APCs) activate T-cell receptor (TCR), TCR-mediated signals are transmitted across the cell membrane by the CD3 chains CD3D, CD3E, CD3G and CD3Z. All CD3 chains contain immunoreceptor tyrosine-based activation motifs (ITAMs) in their cytoplasmic domain. Upon TCR engagement, these motifs become phosphorylated by Src family protein tyrosine kinases LCK and FYN, resulting in the activation of downstream signaling pathways. In addition of this role of signal transduction in T-cell activation, CD3E plays an essential role in correct T-cell development. Also participates in internalization and cell surface down-regulation of TCR-CD3 complexes via endocytosis sequences present in CD3E cytosolic region. In addition to its role as a TCR coreceptor, it serves as a receptor for ITPRIPL1. Ligand recognition inhibits T-cell activation by promoting interaction with NCK1, which prevents CD3E-ZAP70 interaction and blocks the ERK-NFkB signaling cascade and calcium influx. The sequence is that of T-cell surface glycoprotein CD3 epsilon chain (CD3E) from Bos taurus (Bovine).